We begin with the raw amino-acid sequence, 264 residues long: Thymidylate synthase (264 aa).

DUMP contacts are provided by residues Arg21 and 126 to 127; that span reads RR. The active-site Nucleophile is Cys146. Residues 166–169, Asn177, and 207–209 each bind dUMP; these read RSAD and HLY. Residue Asp169 coordinates (6R)-5,10-methylene-5,6,7,8-tetrahydrofolate. A (6R)-5,10-methylene-5,6,7,8-tetrahydrofolate-binding site is contributed by Ala263.

It belongs to the thymidylate synthase family. Bacterial-type ThyA subfamily. Homodimer.

Its subcellular location is the cytoplasm. The catalysed reaction is dUMP + (6R)-5,10-methylene-5,6,7,8-tetrahydrofolate = 7,8-dihydrofolate + dTMP. It participates in pyrimidine metabolism; dTTP biosynthesis. Catalyzes the reductive methylation of 2'-deoxyuridine-5'-monophosphate (dUMP) to 2'-deoxythymidine-5'-monophosphate (dTMP) while utilizing 5,10-methylenetetrahydrofolate (mTHF) as the methyl donor and reductant in the reaction, yielding dihydrofolate (DHF) as a by-product. This enzymatic reaction provides an intracellular de novo source of dTMP, an essential precursor for DNA biosynthesis. The chain is Thymidylate synthase from Nitrobacter hamburgensis (strain DSM 10229 / NCIMB 13809 / X14).